A 493-amino-acid polypeptide reads, in one-letter code: Transmembrane and coiled-coil domain-containing protein 6 (493 aa).

Residues 15 to 84 (GVEELRRRRR…QRGTEEKERE (70 aa)) are a coiled coil. The next 2 helical transmembrane spans lie at 338–358 (VVAA…SLLP) and 386–406 (PLLQ…TVLC).

The protein localises to the membrane. The chain is Transmembrane and coiled-coil domain-containing protein 6 (TMCO6) from Homo sapiens (Human).